The primary structure comprises 224 residues: Thymidine kinase, cytosolic (224 aa).

Residue serine 13 is modified to Phosphoserine. ATP-binding positions include 26–33, 58–60, and 98–101; these read GPMFSGKS, DTR, and DEGQ. The Proton acceptor role is filled by glutamate 99. Phenylalanine 129 contacts substrate. Zn(2+) is bound by residues cysteine 154 and cysteine 157. Substrate-binding positions include 173-177 and tyrosine 182; that span reads VEVIG. Zn(2+) is bound by residues cysteine 186 and cysteine 189. The KEN box motif lies at 203–205; sequence KEN.

It belongs to the thymidine kinase family. Homotetramer. Tetramerization from dimerization is induced by ATP and increases catalytic efficiency due to a high affinity for thymidine. Tetramerization is inhibited by phosphorylation at Ser-13. Interacts (via the KEN box) with FZR1. In terms of processing, phosphorylated on Ser-13 in mitosis. Phosphorylation of Ser-13 by CDK1 during mitosis reduces homotetramerization and catalytic efficiency when DNA replication is complete and intracellular TK1 is still present at a high level. Post-translationally, polyubiquitinated. Postmitosis, ubiquitination leads to proteasomal degradation. The KEN box sequence located at the C-terminal region targets for degradation by the anaphase promoting complex (APC/C) activated and rate-limited by FZR1.

Its subcellular location is the cytoplasm. It catalyses the reaction thymidine + ATP = dTMP + ADP + H(+). Functionally, cell-cycle-regulated enzyme of importance in nucleotide metabolism. Catalyzes the first enzymatic step in the salvage pathway converting thymidine into thymidine monophosphate. Transcriptional regulation limits expression to the S phase of the cell cycle and transient expression coincides with the oscillation in the intracellular dTTP concentration. This Gallus gallus (Chicken) protein is Thymidine kinase, cytosolic (TK1).